The chain runs to 128 residues: Riboflavin kinase (128 aa).

Residue 12–17 (GKGEGK) coordinates CDP. 2 residues coordinate Mg(2+): Thr-41 and Asn-43. FMN is bound by residues Thr-97 and Glu-105. 110-113 (IKLR) contacts CDP.

This sequence belongs to the archaeal riboflavin kinase family. Requires Mg(2+) as cofactor.

The catalysed reaction is riboflavin + CTP = CDP + FMN + H(+). Its pathway is cofactor biosynthesis; FMN biosynthesis; FMN from riboflavin (CTP route): step 1/1. Functionally, catalyzes the CTP-dependent phosphorylation of riboflavin (vitamin B2) to form flavin mononucleotide (FMN). The polypeptide is Riboflavin kinase (Methanococcus aeolicus (strain ATCC BAA-1280 / DSM 17508 / OCM 812 / Nankai-3)).